Reading from the N-terminus, the 322-residue chain is Zinc finger C2HC domain-containing protein zchc-1A (322 aa).

2 consecutive C2HC/C3H-type zinc fingers follow at residues 9–38 (PTFP…LASL) and 119–148 (DYVQ…QATR). Cys-13, Cys-16, His-28, Cys-32, Cys-123, Cys-126, His-138, and Cys-142 together coordinate Zn(2+). The span at 150–159 (QGGNLKSSGG) shows a compositional bias: polar residues. Residues 150–322 (QGGNLKSSGG…SRNNSRSRIF (173 aa)) form a disordered region. Positions 174-220 (NEGKKQESSSRNGSAERKPTTRGRDGSLLRARRDDSNDITSRRKSLD) are enriched in basic and acidic residues. 2 stretches are compositionally biased toward polar residues: residues 221–238 (TRTS…TSLS) and 264–274 (LQQSSTPQQRL). The span at 276–295 (TPASTTTTASRSGSRTSSRA) shows a compositional bias: low complexity. Residues 296–305 (CPRDDSRDSR) are compositionally biased toward basic and acidic residues. Positions 311–322 (NNSRNNSRSRIF) are enriched in low complexity.

Belongs to the ZC2HC1 family. Requires Zn(2+) as cofactor.

The protein is Zinc finger C2HC domain-containing protein zchc-1A of Caenorhabditis elegans.